Consider the following 304-residue polypeptide: E3 ubiquitin-protein ligase RNF115 (304 aa).

At A2 the chain carries N-acetylalanine. Residues 95–138 form a disordered region; it reads PLDQDNRANERGHQTHTDFWGARPPRLPLGRRYRSRGSSRPDRS. Basic and acidic residues predominate over residues 98–110; it reads QDNRANERGHQTH. 2 positions are modified to phosphoserine; by PKB/AKT1: S132 and S133. The RING-type zinc finger occupies 228–269; the sequence is CPVCKEDYTVEEEVRQLPCNHFFHSSCIVPWLELHDTCPVCR. The tract at residues 272-304 is disordered; it reads LNGEDSTRQSQSTEASASNRFSNDSQLHDRWTF. Residues 279-296 show a composition bias toward polar residues; sequence RQSQSTEASASNRFSNDS.

In terms of assembly, interacts with RAB7A. Interacts with EGFR and FLT3. Interacts with BST2. Interacts with STX17. Interacts with YWHAE. Post-translationally, phosphorylated by AKT1, allowing association with the 14-3-3 chaperones that facilitates associating with TLRs. In terms of processing, RING-type zinc finger-dependent and E2-dependent autoubiquitination. Deubiquitinated by USP9X; antogonizing its autoubiquitination and subsequent proteasomal degradation. As to expression, expressed at extremely low levels in normal breast, prostate, lung, colon. Higher levels of expression are detected in heart, skeletal muscle, testis as well as in breast and prostate cancer cells.

The protein resides in the cytoplasm. Its subcellular location is the nucleus. It is found in the endoplasmic reticulum. The protein localises to the golgi apparatus. It carries out the reaction S-ubiquitinyl-[E2 ubiquitin-conjugating enzyme]-L-cysteine + [acceptor protein]-L-lysine = [E2 ubiquitin-conjugating enzyme]-L-cysteine + N(6)-ubiquitinyl-[acceptor protein]-L-lysine.. The protein operates within protein modification; protein ubiquitination. Its function is as follows. E3 ubiquitin-protein ligase that catalyzes the 'Lys-48'- and/or 'Lys-63'-linked polyubiquitination of various substrates and thereby plays a role in a number of signaling pathways including autophagy, innate immunity, cell proliferation and cell death. Plays a role in the endosomal trafficking and degradation of membrane receptors including EGFR, FLT3, MET and CXCR4 through their polyubiquitination. Participates together with BST2 in antiviral immunity by facilitating the internalization of HIV-1 virions into intracellular vesicles leading to their lysosomal degradation. Also possesses an antiviral activity independently of BST2 by promoting retroviral GAG proteins ubiquitination, redistribution to endo-lysosomal compartments and, ultimately, lysosomal degradation. Catalyzes distinct types of ubiquitination on MAVS and STING1 at different phases of viral infection to promote innate antiviral response. Mediates the 'Lys-48'-linked ubiquitination of MAVS leading to its proteasomal degradation and ubiquitinates STING1 via 'Lys-63'-linked polyubiquitination, critical for its oligomerization and the subsequent recruitment of TBK1. Plays a positive role in the autophagosome-lysosome fusion by interacting with STX17 and enhancing its stability without affecting 'Lys-48'- or 'Lys-63'-linked polyubiquitination levels, which in turn promotes autophagosome maturation. Negatively regulates TLR-induced expression of proinflammatory cytokines by catalyzing 'Lys-11'-linked ubiquitination of RAB1A and RAB13 to inhibit post-ER trafficking of TLRs to the Golgi by RAB1A and subsequently from the Golgi apparatus to the cell surface by RAB13. This chain is E3 ubiquitin-protein ligase RNF115, found in Homo sapiens (Human).